The primary structure comprises 404 residues: Tryptophan synthase beta chain (404 aa).

N6-(pyridoxal phosphate)lysine is present on Lys90.

This sequence belongs to the TrpB family. As to quaternary structure, tetramer of two alpha and two beta chains. Pyridoxal 5'-phosphate is required as a cofactor.

The catalysed reaction is (1S,2R)-1-C-(indol-3-yl)glycerol 3-phosphate + L-serine = D-glyceraldehyde 3-phosphate + L-tryptophan + H2O. It functions in the pathway amino-acid biosynthesis; L-tryptophan biosynthesis; L-tryptophan from chorismate: step 5/5. Functionally, the beta subunit is responsible for the synthesis of L-tryptophan from indole and L-serine. The protein is Tryptophan synthase beta chain (trpB) of Geobacillus stearothermophilus (Bacillus stearothermophilus).